Reading from the N-terminus, the 135-residue chain is Large ribosomal subunit protein mL41 (135 aa).

The transit peptide at 1–13 (MGFLTAVTQGLVR) directs the protein to the mitochondrion.

Belongs to the mitochondrion-specific ribosomal protein mL41 family. Component of the mitochondrial ribosome large subunit (39S) which comprises a 16S rRNA and about 50 distinct proteins. Interacts with BCL2.

The protein localises to the mitochondrion. Its function is as follows. Component of the mitochondrial ribosome large subunit. Also involved in apoptosis and cell cycle. Enhances p53/TP53 stability, thereby contributing to p53/TP53-induced apoptosis in response to growth-inhibitory condition. Enhances p53/TP53 translocation to the mitochondria. Has the ability to arrest the cell cycle at the G1 phase, possibly by stabilizing the CDKN1A and CDKN1B (p27Kip1) proteins. This Mus musculus (Mouse) protein is Large ribosomal subunit protein mL41 (Mrpl41).